A 2698-amino-acid polypeptide reads, in one-letter code: MADDEAEQERLSGGGCAAELRRLGERLQELERRLCESREPAVEAAAAYCRQLCQTLLEYAEKWKTSEDPLPLLEVYTVAIQSYVKARPYLTSECESVALVLERLALSCVELLLCLPVELSDKQWEQFQTLVQVAHETLMESGSCELQFLATLAQETGVWKNAVLSTILSQEPLDKEKVNEFLAFEGPILLDMRIKHLIKTNQLSQATALAKLCSDHPEIGTKGSFKQTYLVCLCTSSPSEKLIEEISEVDCKDALEMICNLESEGDEKSALVLCTAFLSRQLQQGDMYCAWELTLFWSKLQQRVEPSVQVYLERCRQLSLLTKTVYHIFFLIKVINSETEGAGLATCIELCVKALRLESTENTEVKISICKTISCLLPEDLEVKRACQLSEFLIEPTVDAYYAVEMLYNQPDQKYDEENLPIPNSLRCELLLVLKTQWPFDPEFWDWKTLKRQCLALMGEEASIVSSIDELNDSEVYEKVDYQGERGDTSVNGLSAAGLGTDSGLLMDTGDEKQKKKEIKELKDRGFISARFRNWQAYMQYCLLCDKEFLGHRIVRHAQKHYKDGIYSCPICAKNFNSKDSFVPHVTLHVKQSSKERLAAMKPLRRLGRPPKITATHENQKTNINTVAKQEQRPIKKNSLYSTDFIVFNDNDGSDDENDDKDKSYEPEVIPVQKPVPVNEFNCPVTFCKKGFKYFKNLIAHVKGHKDSEDAKRFLEMQSKKVICQYCRRHFVSVTHLNDHLQMHCGSKPYICIQMKCKAGFNSYAELLAHRKEHQVFRAKCLFPKCGRIFSQAYLLYDHEAQHYNTYTCKFTGCGKVYRSQSEMEKHQDGHSHPETGLPPEDQLQPSGNDVNPDSGATAAGGRSENSIDKNLGSNRSADWEKNRAEPAVTKHGQISAAELRQANIPLSNGLETRDNTTVLRTNEVAVSIKVSVNHGVEGDFGKQENLTMEGTGEPLITDVHKPGIGAGVQLCHPGFQEKKGHECLNEAQNSLSNSESLKMDDLNPQSLERQVNTLMTFSVQNEAGLEDNSQICKFECGGDVKTSSSLYDLPLKTLESITFVQSQPDLSSPLGSPSVPPKAPGQKFSCQVEGCTRTYNSSQSIGKHMKTAHPDQYAAFKLQRKTKKGQKSNNLNTPNHGKCVYFLPSQVSSSNHAFFTPQTKANGNPACSAQVQHVSPSIFPAHLASVSAPLLPSVESVLSPNIPSQDKHGQDGILCSQMENLSNAPLPAQMEDLTKTVLPLNIDSGSDPFLPLPTENSSLFSSPADSENNSVFSQLENSTNHYPSQTDGNINSSFLKGGSSENGVFPSQVSSADDFSSTSAQPSTPKKVKKDRGRGPNGKERKPKHNKRAKWPAIIRDGKFICSRCYRAFTNPRSLGGHLSKRSYCKPLDGAEIAQELLQTNRQPSLLASMILSTSAVNMQQPQQSNFNPETCFKDPSFLQLLNVENRPTFLPSTFPRCDVSNFNASVSQEGSEIIKQALETAGIPSTFESAEMLSQVVPIGSVSDAAQVSAAGMPGPPVTPLLQTVCHPNTSPSNQNQTPNSKTLKECNSLPLFTTNDLLLKTIENGLCSNSFSSSTEPPQNFTNNSAHVSVISGPQNTRSSHLNKKGNSASKKRKKVAPAVSVSNTSQNVLPTDLPVGLPAKNLPVPDTNTRSDMTPDCEPRALVENLTQKLNNIDNHLFITDVKENCKASLEPHTMLTPLTLKTENGDSRMMPLSSCTPVNSDLQISEDNVIQNFEKTLEIIKTAMNSQILEVKSGSQGTGETTQNAQINYSMQLPSVNSIPDNKLPDASQCSSFLTVMPTKSEALHKEDQIQDILEGLQNLKLENDTSAPASQSMLMNKSVALSPTPTKSTPNIVVQPVPEVIHVQLNDRVNKPFVCQNQGCNYSAMTKDALFKHYGKIHQYTPEMILEIKKNQLKFAPFKCVVPSCTKTFTRNSNLRAHCQLVHHFTIEEMVKLKIKRPYGRKSQSENLSSPQNNQVKKQPSMAEETKTESQPAFKVPAATGDAALANATVIPEKQLAEKKSPEKPESSSQPVTSSAEQYNANLANLKTKGRKNKRHRKEKEEKREKNPVSQAFELPTKYSSYRPYCCVHQGCFAAFTIQQNLILHYQAVHKSNLPTFSAEVEEESEAVKESEETEPKQSMKEFRCQVSDCSRIFQAITGLIQHYMKLHEMTPEEIESMTAAVDVGKFPCDQLECKLSFTTYLSYVVHLEVDHGIGTRTSKAEEDGIYKCDCEGCDRIYATRSNLLRHIFNKHNDKHKAHLIRPRKLTGQENISSKANQEKSKSKHRTTKPNRSGKDGMKMPKTKRKKKSNLENKSAKVVQIEENKPYSLKRGKHVYSIKARNDALAECTSKFVTQYPCMIKGCTSVVTSESNIIRHYKCHKLSRAFTSQHRNILIVFKRYGNPQGKEISEQEDEKNDKKDPDSSVLEKNDNSEPAAAPQEEGRKGEKDEMDELTELFITKLINEDSTNAENQGNTTLKGNNEFQEHDSCTSERQKPGNLKRVYKEKNTVQSKKRKIDKTEPEVSLVVNNTRKEEEPAVAVQTTEEHPASFDWSSFKPMGFEASFLKFLEESAVKQKKNSDRDHSNSGSKRGSHSSSRRHVDKAAVAGSSHVCSCKDSEIFVQFANPSKLQCSENVKIVLDKTLKDRSELVLKQLQEMKPTVSLKKLEVLSNNPDRTVLKEISIGKATGRGQY.

A C2H2-type 1 zinc finger spans residues 567-589; sequence YSCPICAKNFNSKDSFVPHVTLH. Position 654 is a phosphoserine (serine 654). C2H2-type zinc fingers lie at residues 681–705, 722–744, 750–774, 779–803, 807–831, and 1085–1110; these read FNCP…VKGH, VICQ…LQMH, YICI…RKEH, AKCL…EAQH, YTCK…QDGH, and FSCQ…KTAH. The segment covering 822–834 has biased composition (basic and acidic residues); the sequence is SEMEKHQDGHSHP. The segment at 822–894 is disordered; the sequence is SEMEKHQDGH…AEPAVTKHGQ (73 aa). Lysine 1104 is modified (N6-acetyllysine). Serine 1146 bears the Phosphoserine mark. The segment covering 1278-1325 has biased composition (polar residues); that stretch reads NSTNHYPSQTDGNINSSFLKGGSSENGVFPSQVSSADDFSSTSAQPST. Residues 1278–1349 form a disordered region; the sequence is NSTNHYPSQT…KERKPKHNKR (72 aa). A C2H2-type 8; degenerate zinc finger spans residues 1361 to 1383; sequence FICSRCYRAFTNPRSLGGHLSKR. 2 stretches are compositionally biased toward polar residues: residues 1574-1603 and 1624-1633; these read FSSS…TRSS and SVSNTSQNVL. Residues 1574–1656 form a disordered region; sequence FSSSTEPPQN…PVPDTNTRSD (83 aa). 2 consecutive C2H2-type zinc fingers follow at residues 1879–1904 and 1924–1949; these read FVCQ…GKIH and FKCV…QLVH. A disordered region spans residues 1964–1997; it reads PYGRKSQSENLSSPQNNQVKKQPSMAEETKTESQ. Over residues 1971-1984 the composition is skewed to polar residues; that stretch reads SENLSSPQNNQVKK. Lysine 2020 carries the post-translational modification N6-acetyllysine. The span at 2021–2032 shows a compositional bias: basic and acidic residues; it reads QLAEKKSPEKPE. The segment at 2021–2075 is disordered; it reads QLAEKKSPEKPESSSQPVTSSAEQYNANLANLKTKGRKNKRHRKEKEEKREKNPV. Over residues 2038–2051 the composition is skewed to polar residues; sequence VTSSAEQYNANLAN. A compositionally biased stretch (basic residues) spans 2054–2064; that stretch reads TKGRKNKRHRK. C2H2-type zinc fingers lie at residues 2091-2116, 2149-2174, 2193-2218, and 2233-2258; these read YCCV…QAVH, FRCQ…MKLH, FPCD…EVDH, and YKCD…FNKH. Residues 2262–2271 show a composition bias toward basic residues; sequence HKAHLIRPRK. Residues 2262–2323 are disordered; sequence HKAHLIRPRK…KSNLENKSAK (62 aa). A C2H2-type 15 zinc finger spans residues 2362 to 2386; that stretch reads YPCMIKGCTSVVTSESNIIRHYKCH. Disordered regions lie at residues 2411–2454, 2467–2553, and 2580–2608; these read GKEI…GEKD, LINE…EEHP, and KQKK…HVDK. Basic and acidic residues predominate over residues 2421–2437; the sequence is KNDKKDPDSSVLEKNDN. The segment covering 2470–2488 has biased composition (polar residues); that stretch reads EDSTNAENQGNTTLKGNNE. Composition is skewed to basic and acidic residues over residues 2489-2501 and 2580-2590; these read FQEH…ERQK and KQKKNSDRDHS. The segment covering 2596 to 2606 has biased composition (basic residues); it reads RGSHSSSRRHV.

This sequence belongs to the krueppel C2H2-type zinc-finger protein family. As to expression, expressed in postnatal day 1 (P1) pituitary. Also detected in presomatotrophic cell line GHFT1-5.

It localises to the nucleus. May be involved in transcriptional regulation. This Mus musculus (Mouse) protein is Zinc finger protein 292.